The chain runs to 1259 residues: Protein retinal degeneration B (1259 aa).

The disordered stretch occupies residues 268 to 378 (GGGEECSDDS…SKGALHSPVG (111 aa)). 2 positions are modified to phosphoserine: Ser-274 and Ser-277. Low complexity predominate over residues 284 to 293 (STAATAASTT). The span at 318-335 (SSDEEGEEEEDDDEDEND) shows a compositional bias: acidic residues. Positions 347–363 (QGGSAQRSRSQSIQMAQ) are enriched in low complexity. 3 positions are modified to phosphoserine: Ser-401, Ser-403, and Ser-434. 3 disordered regions span residues 427–454 (LLGE…GNSR), 472–500 (RGNK…STPS), and 660–692 (SQPG…NSRL). Residues 663-678 (GTASGASNSGGDAATN) are compositionally biased toward low complexity. Over residues 679-689 (INTHNPLSPRN) the composition is skewed to polar residues. The 184-residue stretch at 730–913 (LDFEVCDFFM…IAFILRQIGK (184 aa)) folds into the DDHD domain.

The protein belongs to the PtdIns transfer protein family. PI transfer class IIA subfamily. As to expression, expressed in adult heads, not detected in bodies.

The enzyme catalyses a 1,2-diacyl-sn-glycero-3-phospho-(1D-myo-inositol)(in) = a 1,2-diacyl-sn-glycero-3-phospho-(1D-myo-inositol)(out). It carries out the reaction a 1,2-diacyl-sn-glycero-3-phosphate(in) = a 1,2-diacyl-sn-glycero-3-phosphate(out). In terms of biological role, catalyzes the transfer of phosphatidylinositol (PI) and phosphatidic acid (PA) between membranes. May control phosphatidylinositol concentration in transport vesicles from the subrhabdomeric cisternae (SRC) to the rhabdomere. May function as a calcium transporter. This Drosophila melanogaster (Fruit fly) protein is Protein retinal degeneration B (rdgB).